We begin with the raw amino-acid sequence, 187 residues long: GTP cyclohydrolase 1 (187 aa).

Residues C81, H84, and C152 each contribute to the Zn(2+) site.

It belongs to the GTP cyclohydrolase I family. As to quaternary structure, homomer.

The catalysed reaction is GTP + H2O = 7,8-dihydroneopterin 3'-triphosphate + formate + H(+). It participates in cofactor biosynthesis; 7,8-dihydroneopterin triphosphate biosynthesis; 7,8-dihydroneopterin triphosphate from GTP: step 1/1. The protein is GTP cyclohydrolase 1 of Pyrobaculum neutrophilum (strain DSM 2338 / JCM 9278 / NBRC 100436 / V24Sta) (Thermoproteus neutrophilus).